A 342-amino-acid polypeptide reads, in one-letter code: N-acetyl-gamma-glutamyl-phosphate reductase (342 aa).

Cysteine 149 is an active-site residue.

The protein belongs to the NAGSA dehydrogenase family. Type 1 subfamily.

The protein resides in the cytoplasm. The enzyme catalyses N-acetyl-L-glutamate 5-semialdehyde + phosphate + NADP(+) = N-acetyl-L-glutamyl 5-phosphate + NADPH + H(+). It participates in amino-acid biosynthesis; L-arginine biosynthesis; N(2)-acetyl-L-ornithine from L-glutamate: step 3/4. Functionally, catalyzes the NADPH-dependent reduction of N-acetyl-5-glutamyl phosphate to yield N-acetyl-L-glutamate 5-semialdehyde. The polypeptide is N-acetyl-gamma-glutamyl-phosphate reductase (Nitrosomonas eutropha (strain DSM 101675 / C91 / Nm57)).